A 446-amino-acid chain; its full sequence is Sorting nexin-30 (446 aa).

Positions 1 to 18 (MSGSSTPKSLPTSGQQSL) are enriched in polar residues. Residues 1–84 (MSGSSTPKSL…SSPASSSSLL (84 aa)) form a disordered region. Residues 70–84 (TPADTSSPASSSSLL) show a composition bias toward low complexity. A PX domain is found at 98 to 219 (RDLFVTVDDP…VFLTAKDLNS (122 aa)). The a 1,2-diacyl-sn-glycero-3-phospho-(1D-myo-inositol-3-phosphate) site is built by Arg-141, Gln-143, Lys-171, and Arg-185. The 204-residue stretch at 243-446 (KLRNRPVEFA…PLLQDKQEPK (204 aa)) folds into the BAR domain.

The protein belongs to the sorting nexin family.

It localises to the early endosome membrane. Its function is as follows. Involved in the regulation of endocytosis and in several stages of intracellular trafficking. Together with snx4, involved in autophagosome assembly. In Xenopus tropicalis (Western clawed frog), this protein is Sorting nexin-30 (snx30).